We begin with the raw amino-acid sequence, 234 residues long: Urease accessory protein UreF (234 aa).

This sequence belongs to the UreF family. UreD, UreF and UreG form a complex that acts as a GTP-hydrolysis-dependent molecular chaperone, activating the urease apoprotein by helping to assemble the nickel containing metallocenter of UreC. The UreE protein probably delivers the nickel.

Its subcellular location is the cytoplasm. Its function is as follows. Required for maturation of urease via the functional incorporation of the urease nickel metallocenter. In Kocuria rhizophila (strain ATCC 9341 / DSM 348 / NBRC 103217 / DC2201), this protein is Urease accessory protein UreF.